Here is a 255-residue protein sequence, read N- to C-terminus: 1-(5-phosphoribosyl)-5-[(5-phosphoribosylamino)methylideneamino] imidazole-4-carboxamide isomerase (255 aa).

D8 functions as the Proton acceptor in the catalytic mechanism. Catalysis depends on D129, which acts as the Proton donor.

The protein belongs to the HisA/HisF family.

It is found in the cytoplasm. It catalyses the reaction 1-(5-phospho-beta-D-ribosyl)-5-[(5-phospho-beta-D-ribosylamino)methylideneamino]imidazole-4-carboxamide = 5-[(5-phospho-1-deoxy-D-ribulos-1-ylimino)methylamino]-1-(5-phospho-beta-D-ribosyl)imidazole-4-carboxamide. It functions in the pathway amino-acid biosynthesis; L-histidine biosynthesis; L-histidine from 5-phospho-alpha-D-ribose 1-diphosphate: step 4/9. This Prochlorococcus marinus (strain MIT 9313) protein is 1-(5-phosphoribosyl)-5-[(5-phosphoribosylamino)methylideneamino] imidazole-4-carboxamide isomerase.